A 3473-amino-acid polypeptide reads, in one-letter code: AP2/ERF domain-containing protein PFD0985w (3473 aa).

Disordered stretches follow at residues 35–61, 366–450, 647–704, 750–801, 1096–1196, 1300–1328, 1388–1418, 1773–1807, and 1864–1898; these read NNII…NNNN, KMER…HLVC, NNNN…INAK, NIIK…RKKK, VDNN…MNMN, DNTS…NSRG, HLRS…GAER, NNTG…NNKV, and IGED…NNLS. Low complexity-rich tracts occupy residues 44–61, 396–442, and 647–666; these read NGHN…NNNN, NNND…NSNN, and NNNN…NNNN. Over residues 683–694 the composition is skewed to basic and acidic residues; that stretch reads TGDKHETSKKED. Residues 751–768 show a composition bias toward low complexity; sequence IIKSDNVNNNNNNNNNNN. The span at 785 to 801 shows a compositional bias: basic residues; that stretch reads NKKHKKKNIHDNNRKKK. Low complexity predominate over residues 1098–1156; sequence NNNNNNNNNNNNNVNNISNNGTNLEENANNANNANNPNNANNPNNANNSNNADYVNDYN. Acidic residues predominate over residues 1160-1171; sequence KEEDDDDEEEDN. Residues 1182-1196 show a composition bias toward low complexity; that stretch reads TNYNININGENMNMN. 2 stretches are compositionally biased toward polar residues: residues 1314–1326 and 1390–1412; these read VGSN…NNNS and RSSN…SSMR. A compositionally biased stretch (low complexity) spans 1773-1805; the sequence is NNTGTTQNNNKYGTNSNNNNNNNNNNNNNNNNN. The segment covering 1881-1893 has biased composition (basic residues); it reads LKRRKNGNSKRAK. The segment at residues 1957–2011 is a DNA-binding region (AP2/ERF 1); that stretch reads PLPTGVYFDSARKLWRCQWKENGKFKTKGFSLIHYSTLEEARKQCILYRCDVGNI. 8 disordered regions span residues 2068–2088, 2319–2343, 2387–2470, 2520–2584, 2609–2677, 2840–2860, 2881–2902, and 2937–2960; these read EKTG…NVNN, QVDV…SNSK, TNDN…NIRS, LGNG…NYNN, LYGK…PASN, MNNN…NNVK, NDKL…SSSP, and KYVE…KKDE. A compositionally biased stretch (basic residues) spans 2333–2342; sequence KRSKRSKSNS. Composition is skewed to low complexity over residues 2388-2400 and 2409-2460; these read NDNN…NNND and DNNN…NNND. Residues 2525-2542 show a composition bias toward acidic residues; sequence DGEEEGGGDYDEKEDDLL. Low complexity-rich tracts occupy residues 2557 to 2584 and 2615 to 2624; these read NNNN…NYNN and NNNNNNNNNN. A compositionally biased stretch (polar residues) spans 2663–2675; that stretch reads LLNSQVNESSAPA. Positions 2841–2858 are enriched in low complexity; sequence NNNNNNNNNNNNNNNNNN. The span at 2943–2953 shows a compositional bias: basic and acidic residues; the sequence is NGDKETNDYNT. Residues 3268 to 3321 constitute a DNA-binding region (AP2/ERF 2); sequence SLPKGIYYDHAKKLYRVQYIINNSIKTKGFSVKKLGLAQAKIEAESFRNFCLEN. Residues 3369 to 3391 show a composition bias toward low complexity; sequence KMSINNDGNNNDGNNNDGNNNDD. The disordered stretch occupies residues 3369–3473; sequence KMSINNDGNN…NNDNEMSQNE (105 aa). Positions 3392 to 3403 are enriched in acidic residues; the sequence is NNNDDNNNDDNN. Low complexity predominate over residues 3404–3457; the sequence is NDGNNNDDNNNEGINNDDNNNEGINNDDNNNEGINNNDDNNNNDDNNNEGINND.

It localises to the nucleus. The sequence is that of AP2/ERF domain-containing protein PFD0985w from Plasmodium falciparum (isolate 3D7).